The chain runs to 220 residues: NADH-quinone oxidoreductase subunit I (220 aa).

4Fe-4S ferredoxin-type domains are found at residues 71 to 102 (LQRL…IITH) and 112 to 141 (DSYT…MGNR). Residues Cys-82, Cys-85, Cys-88, Cys-92, Cys-121, Cys-124, Cys-127, and Cys-131 each coordinate [4Fe-4S] cluster. Residues 187–220 (MQATPLDYVQEPSKEESKEETPTRSESHKGDENV) are disordered. Over residues 198–220 (PSKEESKEETPTRSESHKGDENV) the composition is skewed to basic and acidic residues.

It belongs to the complex I 23 kDa subunit family. As to quaternary structure, NDH-1 is composed of 14 different subunits. Subunits NuoA, H, J, K, L, M, N constitute the membrane sector of the complex. [4Fe-4S] cluster serves as cofactor.

It is found in the cell inner membrane. The enzyme catalyses a quinone + NADH + 5 H(+)(in) = a quinol + NAD(+) + 4 H(+)(out). Its function is as follows. NDH-1 shuttles electrons from NADH, via FMN and iron-sulfur (Fe-S) centers, to quinones in the respiratory chain. The immediate electron acceptor for the enzyme in this species is believed to be ubiquinone. Couples the redox reaction to proton translocation (for every two electrons transferred, four hydrogen ions are translocated across the cytoplasmic membrane), and thus conserves the redox energy in a proton gradient. The sequence is that of NADH-quinone oxidoreductase subunit I from Helicobacter pylori (strain G27).